We begin with the raw amino-acid sequence, 504 residues long: Topoisomerase I damage affected protein 11 (504 aa).

Positions R32 to Q62 are disordered. A coiled-coil region spans residues A179 to D231. T236 is subject to Phosphothreonine. Residues S244 and S286 each carry the phosphoserine modification. 3 disordered regions span residues L252–S306, W332–R377, and D400–F504. Polar residues predominate over residues E257–P287. Positions I290 to D301 are enriched in basic and acidic residues. Composition is skewed to polar residues over residues W332 to D359 and K368 to R377. A compositionally biased stretch (basic and acidic residues) spans T403–K421. The span at T470–S479 shows a compositional bias: basic residues. Residues D491–F504 are compositionally biased toward polar residues.

Belongs to the TDA11 family.

It is found in the cytoplasm. The sequence is that of Topoisomerase I damage affected protein 11 (TDA11) from Saccharomyces cerevisiae (strain ATCC 204508 / S288c) (Baker's yeast).